A 339-amino-acid polypeptide reads, in one-letter code: Ketol-acid reductoisomerase (NADP(+)) (339 aa).

Residues 1–182 (MRVYYDRDAD…GGGRAGIIET (182 aa)) enclose the KARI N-terminal Rossmann domain. NADP(+) is bound by residues 24 to 27 (YGSQ), Arg48, Ser51, Ser53, and 83 to 86 (DELQ). His108 is a catalytic residue. Gly134 provides a ligand contact to NADP(+). The 146-residue stretch at 183–328 (TFKEECETDL…EKLREMMPWI (146 aa)) folds into the KARI C-terminal knotted domain. Positions 191, 195, 227, and 231 each coordinate Mg(2+). A substrate-binding site is contributed by Ser252.

This sequence belongs to the ketol-acid reductoisomerase family. Mg(2+) is required as a cofactor.

It catalyses the reaction (2R)-2,3-dihydroxy-3-methylbutanoate + NADP(+) = (2S)-2-acetolactate + NADPH + H(+). The enzyme catalyses (2R,3R)-2,3-dihydroxy-3-methylpentanoate + NADP(+) = (S)-2-ethyl-2-hydroxy-3-oxobutanoate + NADPH + H(+). The protein operates within amino-acid biosynthesis; L-isoleucine biosynthesis; L-isoleucine from 2-oxobutanoate: step 2/4. Its pathway is amino-acid biosynthesis; L-valine biosynthesis; L-valine from pyruvate: step 2/4. Involved in the biosynthesis of branched-chain amino acids (BCAA). Catalyzes an alkyl-migration followed by a ketol-acid reduction of (S)-2-acetolactate (S2AL) to yield (R)-2,3-dihydroxy-isovalerate. In the isomerase reaction, S2AL is rearranged via a Mg-dependent methyl migration to produce 3-hydroxy-3-methyl-2-ketobutyrate (HMKB). In the reductase reaction, this 2-ketoacid undergoes a metal-dependent reduction by NADPH to yield (R)-2,3-dihydroxy-isovalerate. This is Ketol-acid reductoisomerase (NADP(+)) from Azorhizobium caulinodans (strain ATCC 43989 / DSM 5975 / JCM 20966 / LMG 6465 / NBRC 14845 / NCIMB 13405 / ORS 571).